Here is a 152-residue protein sequence, read N- to C-terminus: Large ribosomal subunit protein bL9 (152 aa).

It belongs to the bacterial ribosomal protein bL9 family.

In terms of biological role, binds to the 23S rRNA. The polypeptide is Large ribosomal subunit protein bL9 (Prochlorococcus marinus (strain NATL1A)).